The primary structure comprises 37 residues: Albumin-2 (37 aa).

The stretch at 6–37 is one Hemopexin repeat; that stretch reads IANFSVLNXEAYLFINDKYVLLDYAPGTXNDK.

Dimer. In terms of tissue distribution, expressed in seeds (at protein level).

The protein localises to the cytoplasm. It localises to the cytosol. Functionally, binds hemin and thiamine. This is Albumin-2 from Lens culinaris (Lentil).